Here is an 84-residue protein sequence, read N- to C-terminus: Small ribosomal subunit protein uS17 (84 aa).

It belongs to the universal ribosomal protein uS17 family. In terms of assembly, part of the 30S ribosomal subunit.

Its function is as follows. One of the primary rRNA binding proteins, it binds specifically to the 5'-end of 16S ribosomal RNA. This Clostridium acetobutylicum (strain ATCC 824 / DSM 792 / JCM 1419 / IAM 19013 / LMG 5710 / NBRC 13948 / NRRL B-527 / VKM B-1787 / 2291 / W) protein is Small ribosomal subunit protein uS17.